The chain runs to 304 residues: Eukaryotic translation initiation factor 2 subunit alpha (304 aa).

The S1 motif domain maps to aspartate 17 to arginine 88. At serine 52 the chain carries Phosphoserine; by GCN2. The interval leucine 283–glutamate 304 is disordered. Residues glutamate 284–aspartate 293 are compositionally biased toward basic and acidic residues. Serine 292 and serine 294 each carry phosphoserine. Over residues serine 294 to glutamate 304 the composition is skewed to acidic residues.

It belongs to the eIF-2-alpha family. Eukaryotic translation initiation factor 2 eIF2 is a heterotrimeric complex composed of an alpha, a beta and a gamma subunit. The factors eIF-1, eIF-2, eIF-3, TIF5/eIF-5 and methionyl-tRNAi form a multifactor complex (MFC) that may bind to the 40S ribosome. Interacts with CDC123; the interaction is direct. Interacts with GCD1. Post-translationally, phosphorylated; phosphorylation on Ser-52 by the GCN2 protein kinase occurs in response to low amino acid, carbon, or purine availability. Phosphorylation inhibits the guanine nucleotide exchange factor activity of the eIF2B complex.

It is found in the cytoplasm. It localises to the cytosol. In terms of biological role, eIF-2 functions in the early steps of protein synthesis by forming a ternary complex with GTP and initiator tRNA. This complex binds to a 40S ribosomal subunit, followed by mRNA binding to form a 43S pre-initiation complex. Junction of the 60S ribosomal subunit to form the 80S initiation complex is preceded by hydrolysis of the GTP bound to eIF-2 and release of an eIF-2-GDP binary complex. In order for eIF-2 to recycle and catalyze another round of initiation, the GDP bound to eIF-2 must exchange with GTP by way of a reaction catalyzed by eIF2B. The chain is Eukaryotic translation initiation factor 2 subunit alpha from Saccharomyces cerevisiae (strain ATCC 204508 / S288c) (Baker's yeast).